Here is a 277-residue protein sequence, read N- to C-terminus: uncharacterized protein (277 aa).

2 disordered regions span residues 33-168 (KNDN…VTTR) and 210-277 (NKLL…PIEF). Positions 34 to 45 (NDNDERTAHEES) are enriched in basic and acidic residues. Positions 86-99 (LKSKSKRKTKKGGS) are enriched in basic residues. Composition is skewed to basic and acidic residues over residues 100 to 113 (KPREENVNTEKHIV), 151 to 168 (AKELSYDELKDKLEVTTR), and 216 to 230 (TNEDEINKSQRNKEK). Residues 231-241 (DRKRRERRTAR) show a composition bias toward basic residues. A compositionally biased stretch (basic and acidic residues) spans 242 to 258 (RKDERKQEKKQEKKQDN). A compositionally biased stretch (polar residues) spans 259–271 (KTSQSFPSSTDMN).

Its subcellular location is the cytoplasm. This is an uncharacterized protein from Saccharomyces cerevisiae (strain ATCC 204508 / S288c) (Baker's yeast).